The chain runs to 289 residues: Pteridine reductase 1 (289 aa).

Glycine 14–serine 41 provides a ligand contact to NADP(+). Serine 176 serves as a coordination point for substrate. The active-site Proton acceptor is the tyrosine 195. Tyrosine 195–lysine 199 contacts NADP(+).

It belongs to the short-chain dehydrogenases/reductases (SDR) family. In terms of assembly, homotetramer.

The catalysed reaction is (6R)-L-erythro-5,6,7,8-tetrahydrobiopterin + 2 NADP(+) = L-erythro-biopterin + 2 NADPH + 2 H(+). It participates in cofactor biosynthesis; tetrahydrobiopterin biosynthesis; tetrahydrobiopterin from biopterin: step 1/1. Its function is as follows. Exhibits a NADPH-dependent biopterin reductase activity. Has good activity with folate and significant activity with dihydrofolate and dihydrobiopterin, but not with quinonoid dihydrobiopterin. Confers resistance to methotrexate (MTX). The sequence is that of Pteridine reductase 1 (PTR1) from Leishmania tarentolae (Sauroleishmania tarentolae).